A 246-amino-acid chain; its full sequence is NAD-dependent protein deacylase (246 aa).

One can recognise a Deacetylase sirtuin-type domain in the interval M1 to A237. G13–W32 contacts NAD(+). Substrate-binding residues include Y57 and R60. NAD(+) is bound at residue Q94–D97. H112 functions as the Proton acceptor in the catalytic mechanism. Zn(2+)-binding residues include C120 and C139. NAD(+) is bound by residues G179–S181, N205–E207, and A223.

Belongs to the sirtuin family. Class III subfamily. Zn(2+) is required as a cofactor.

The protein resides in the cytoplasm. The enzyme catalyses N(6)-acetyl-L-lysyl-[protein] + NAD(+) + H2O = 2''-O-acetyl-ADP-D-ribose + nicotinamide + L-lysyl-[protein]. It catalyses the reaction N(6)-succinyl-L-lysyl-[protein] + NAD(+) + H2O = 2''-O-succinyl-ADP-D-ribose + nicotinamide + L-lysyl-[protein]. Its function is as follows. NAD-dependent lysine deacetylase and desuccinylase that specifically removes acetyl and succinyl groups on target proteins. Modulates the activities of several proteins which are inactive in their acylated form. In Vibrio cholerae serotype O1 (strain ATCC 39315 / El Tor Inaba N16961), this protein is NAD-dependent protein deacylase.